The chain runs to 249 residues: Pyridoxine 5'-phosphate synthase (249 aa).

A 3-amino-2-oxopropyl phosphate-binding site is contributed by Asn-12. 14–15 (DH) serves as a coordination point for 1-deoxy-D-xylulose 5-phosphate. Arg-23 contributes to the 3-amino-2-oxopropyl phosphate binding site. Catalysis depends on His-48, which acts as the Proton acceptor. 2 residues coordinate 1-deoxy-D-xylulose 5-phosphate: Arg-50 and His-55. Catalysis depends on Glu-75, which acts as the Proton acceptor. Position 105 (Thr-105) interacts with 1-deoxy-D-xylulose 5-phosphate. His-199 serves as the catalytic Proton donor. 3-amino-2-oxopropyl phosphate is bound by residues Gly-200 and 221–222 (GH).

The protein belongs to the PNP synthase family. Homooctamer; tetramer of dimers.

The protein localises to the cytoplasm. The enzyme catalyses 3-amino-2-oxopropyl phosphate + 1-deoxy-D-xylulose 5-phosphate = pyridoxine 5'-phosphate + phosphate + 2 H2O + H(+). The protein operates within cofactor biosynthesis; pyridoxine 5'-phosphate biosynthesis; pyridoxine 5'-phosphate from D-erythrose 4-phosphate: step 5/5. Functionally, catalyzes the complicated ring closure reaction between the two acyclic compounds 1-deoxy-D-xylulose-5-phosphate (DXP) and 3-amino-2-oxopropyl phosphate (1-amino-acetone-3-phosphate or AAP) to form pyridoxine 5'-phosphate (PNP) and inorganic phosphate. In Roseobacter denitrificans (strain ATCC 33942 / OCh 114) (Erythrobacter sp. (strain OCh 114)), this protein is Pyridoxine 5'-phosphate synthase.